Reading from the N-terminus, the 359-residue chain is Membrane-bound lytic murein transglycosylase C (359 aa).

The N-terminal stretch at 1 to 16 (MKKYLALALIAPLLIS) is a signal peptide. Residue C17 is the site of N-palmitoyl cysteine attachment. The S-diacylglycerol cysteine moiety is linked to residue C17.

The protein belongs to the transglycosylase Slt family.

The protein localises to the cell outer membrane. The enzyme catalyses Exolytic cleavage of the (1-&gt;4)-beta-glycosidic linkage between N-acetylmuramic acid (MurNAc) and N-acetylglucosamine (GlcNAc) residues in peptidoglycan, from either the reducing or the non-reducing ends of the peptidoglycan chains, with concomitant formation of a 1,6-anhydrobond in the MurNAc residue.. Its function is as follows. Murein-degrading enzyme. May play a role in recycling of muropeptides during cell elongation and/or cell division. The sequence is that of Membrane-bound lytic murein transglycosylase C from Escherichia coli O8 (strain IAI1).